Here is a 485-residue protein sequence, read N- to C-terminus: UDP-N-acetylmuramate--L-alanine ligase (485 aa).

120–126 (GSHGKTT) contributes to the ATP binding site.

The protein belongs to the MurCDEF family.

It is found in the cytoplasm. The enzyme catalyses UDP-N-acetyl-alpha-D-muramate + L-alanine + ATP = UDP-N-acetyl-alpha-D-muramoyl-L-alanine + ADP + phosphate + H(+). The protein operates within cell wall biogenesis; peptidoglycan biosynthesis. In terms of biological role, cell wall formation. In Rickettsia rickettsii (strain Iowa), this protein is UDP-N-acetylmuramate--L-alanine ligase.